The sequence spans 326 residues: Pancreas transcription factor 1 subunit alpha (326 aa).

The 53-residue stretch at 162 to 214 folds into the bHLH domain; sequence QLRQAANVRERRRMQSINDAFEGLRSHIPTLPYEKRLSKVDTLRLAIGYINFL. A compositionally biased stretch (gly residues) spans 229-240; it reads TGGCGGPGGSRH. Disordered stretches follow at residues 229–249 and 304–326; these read TGGCGGPGGSRHLGGDSPGNQ and DPRKLNSKSFDNIENEPPFEFVS.

In terms of assembly, component of the pancreas transcription factor 1 complex (PTF1) which is composed of TCF3/p75, TCF12/p64 and PTF1A/p48. TCF3 is responsible for the nuclear import of the p48/p64 complex. Interacts with TCF3 and RBPSUH/RBP-Jkappa. As to expression, exocrine pancreas-specific. Expressed in azaserine-induced pancreatic tumors (at protein level). Expressed in AR42J cells but not in ARIP, DSL6A, or DSL6B cells. Down-regulation is associated with the change of an azaserine-induced acinar cell carcinoma to a ductal phenotype.

Its subcellular location is the nucleus. It is found in the cytoplasm. Transcription factor implicated in the cell fate determination in various organs. Binds to the E-box consensus sequence 5'-CANNTG-3'. Plays a role in early and late pancreas development and differentiation. Important for determining whether cells allocated to the pancreatic buds continue towards pancreatic organogenesis or revert back to duodenal fates. May be involved in the maintenance of exocrine pancreas-specific gene expression including ELA1 and amylase. Required for the formation of pancreatic acinar and ductal cells. Plays an important role in cerebellar development. Directly regulated by FOXN4 and RORC during retinal development, FOXN4-PTF1A pathway plays a central role in directing the differentiation of retinal progenitors towards horizontal and amacrine fates. The chain is Pancreas transcription factor 1 subunit alpha (Ptf1a) from Rattus norvegicus (Rat).